The following is a 792-amino-acid chain: Phenylalanine--tRNA ligase beta subunit (792 aa).

Residues 39 to 147 form the tRNA-binding domain; it reads GESLGQVVVA…DDAPVGQALA (109 aa). The B5 domain occupies 400–475; it reads PQPARILLRR…RIHGYDRVPT (76 aa). Residues Asp-453, Asp-459, Glu-462, and Asp-463 each contribute to the Mg(2+) site. The 94-residue stretch at 698 to 791 folds into the FDX-ACB domain; the sequence is SRFPSVRRDL…IEREHRARIR (94 aa).

Belongs to the phenylalanyl-tRNA synthetase beta subunit family. Type 1 subfamily. In terms of assembly, tetramer of two alpha and two beta subunits. It depends on Mg(2+) as a cofactor.

It localises to the cytoplasm. The catalysed reaction is tRNA(Phe) + L-phenylalanine + ATP = L-phenylalanyl-tRNA(Phe) + AMP + diphosphate + H(+). The protein is Phenylalanine--tRNA ligase beta subunit of Xanthomonas oryzae pv. oryzae (strain KACC10331 / KXO85).